Reading from the N-terminus, the 998-residue chain is Mediator of RNA polymerase II transcription subunit 14 (998 aa).

Belongs to the Mediator complex subunit 14 family. As to quaternary structure, component of the Mediator complex.

Its subcellular location is the nucleus. Component of the Mediator complex, a coactivator involved in the regulated transcription of nearly all RNA polymerase II-dependent genes. Mediator functions as a bridge to convey information from gene-specific regulatory proteins to the basal RNA polymerase II transcription machinery. Mediator is recruited to promoters by direct interactions with regulatory proteins and serves as a scaffold for the assembly of a functional preinitiation complex with RNA polymerase II and the general transcription factors. The polypeptide is Mediator of RNA polymerase II transcription subunit 14 (RGR1) (Kluyveromyces lactis (strain ATCC 8585 / CBS 2359 / DSM 70799 / NBRC 1267 / NRRL Y-1140 / WM37) (Yeast)).